We begin with the raw amino-acid sequence, 1363 residues long: Spike glycoprotein (1363 aa).

The N-terminal stretch at 1–13 is a signal peptide; the sequence is MFLILLISLPMAL. Topologically, residues 14–1307 are extracellular; that stretch reads AVIGDLKCTT…GTYEYYVKWP (1294 aa). The BetaCoV S1-NTD domain maps to 15-298; sequence VIGDLKCTTV…DFMSEIKCKT (284 aa). Cystine bridges form between cysteine 21-cysteine 165, cysteine 160-cysteine 193, cysteine 172-cysteine 252, cysteine 286-cysteine 296, and cysteine 331-cysteine 356. Asparagine 59 and asparagine 133 each carry an N-linked (GlcNAc...) asparagine; by host glycan. Asparagine 198 is a glycosylation site (N-linked (GlcNAc...) asparagine; by host). The BetaCoV S1-CTD domain maps to 329-617; that stretch reads PDCNIEAWLN…DVNSGTTCST (289 aa). An N-linked (GlcNAc...) asparagine; by host glycan is attached at asparagine 359. 2 disulfides stabilise this stretch: cysteine 374–cysteine 427 and cysteine 386–cysteine 615. 7 N-linked (GlcNAc...) asparagine; by host glycosylation sites follow: asparagine 437, asparagine 649, asparagine 676, asparagine 696, asparagine 714, asparagine 739, and asparagine 788. 2 fusion peptide regions span residues 914-935 and 933-953; these read SAIEDLLFSKVKLSDVGFVEAY and EAYNNCTGGAEIRDLICVQSY. A glycan (N-linked (GlcNAc...) asparagine; by host) is linked at asparagine 937. Cysteine 938 and cysteine 949 form a disulfide bridge. The segment at 1014–1064 is heptad repeat 1; sequence QKLIANAFNNALDAIQEGFDATNSALVKIQAVVNANAEALNNLLQQLSNRF. Residues 1043-1087 adopt a coiled-coil conformation; the sequence is QAVVNANAEALNNLLQQLSNRFGAISSSLQEILSRLDALEAQAQI. Asparagine 1194, asparagine 1224, asparagine 1234, asparagine 1253, asparagine 1267, and asparagine 1288 each carry an N-linked (GlcNAc...) asparagine; by host glycan. The tract at residues 1258-1296 is heptad repeat 2; sequence APDLSLDYINVTFLDLQDEMNRLQEAIKVLNQSYINLKD. The stretch at 1269–1297 forms a coiled coil; it reads TFLDLQDEMNRLQEAIKVLNQSYINLKDI. The chain crosses the membrane as a helical span at residues 1308–1328; that stretch reads WYVWLLIGLAGVAMLVLLFFI. The Cytoplasmic segment spans residues 1329 to 1363; sequence CCCTGCGTSCFKKCGGCCDDYTGHQELVIKTSHDD. Positions 1359–1363 match the KxHxx motif; the sequence is TSHDD.

This sequence belongs to the betacoronaviruses spike protein family. Homotrimer; each monomer consists of a S1 and a S2 subunit. The resulting peplomers protrude from the virus surface as spikes. Specific enzymatic cleavages in vivo yield mature proteins. The precursor is processed into S1 and S2 by host cell furin or another cellular protease to yield the mature S1 and S2 proteins. Additionally, a second cleavage leads to the release of a fusion peptide after viral attachment to host cell receptor. In terms of processing, the cytoplasmic Cys-rich domain is palmitoylated. Spike glycoprotein is digested within host endosomes.

The protein localises to the virion membrane. It is found in the host endoplasmic reticulum-Golgi intermediate compartment membrane. It localises to the host cell membrane. In terms of biological role, attaches the virion to the cell membrane by interacting with host receptor, initiating the infection. Mediates fusion of the virion and cellular membranes by acting as a class I viral fusion protein. Under the current model, the protein has at least three conformational states: pre-fusion native state, pre-hairpin intermediate state, and post-fusion hairpin state. During viral and target cell membrane fusion, the coiled coil regions (heptad repeats) assume a trimer-of-hairpins structure, positioning the fusion peptide in close proximity to the C-terminal region of the ectodomain. The formation of this structure appears to drive apposition and subsequent fusion of viral and target cell membranes. Its function is as follows. Acts as a viral fusion peptide which is unmasked following S2 cleavage occurring upon virus endocytosis. This is Spike glycoprotein from Bos taurus (Bovine).